Reading from the N-terminus, the 109-residue chain is U4-lycotoxin-Ls1d (109 aa).

Positions 1 to 22 (MKVLVLFSVLFLTLFSYSSTEA) are cleaved as a signal peptide. Residues 23-44 (MDEFDSDAEEDMLSLMANEQVR) constitute a propeptide that is removed on maturation. The interval 45 to 88 (AKACTPRLHDCSHDRHSCCRGELFKDVCYCFYPEGEDKTEVCSC) is knottin domain. 4 cysteine pairs are disulfide-bonded: C48–C63, C55–C72, C62–C88, and C74–C86. The linear cationic cytotoxin domain stretch occupies residues 89–108 (QQPKSHKYIEKVVDKARTVV).

Belongs to the neurotoxin 19 (CSTX) family. 05 (U4-Lctx) subfamily. As to expression, expressed by the venom gland.

The protein resides in the secreted. Enhances the high-affinity desensitization of human P2RX3 purinoceptors. The chain is U4-lycotoxin-Ls1d from Lycosa singoriensis (Wolf spider).